Reading from the N-terminus, the 178-residue chain is Large ribosomal subunit protein uL6 (178 aa).

This sequence belongs to the universal ribosomal protein uL6 family. As to quaternary structure, part of the 50S ribosomal subunit.

This protein binds to the 23S rRNA, and is important in its secondary structure. It is located near the subunit interface in the base of the L7/L12 stalk, and near the tRNA binding site of the peptidyltransferase center. In Campylobacter lari (strain RM2100 / D67 / ATCC BAA-1060), this protein is Large ribosomal subunit protein uL6.